The primary structure comprises 519 residues: cAMP-dependent protein kinase catalytic subunit (519 aa).

The segment at 1 to 195 (MLPDTGILSP…SQTLQKAENA (195 aa)) is disordered. 3 stretches are compositionally biased toward polar residues: residues 10–25 (PFTT…SQTL), 116–159 (VTPS…TSPI), and 173–191 (TPVN…TLQK). The Protein kinase domain occupies 208 to 463 (FNFQRTLGTG…SRSVLEHPWF (256 aa)). ATP contacts are provided by residues 214-222 (LGTGSFGRV) and Lys237. Asp331 (proton acceptor) is an active-site residue. Residues 464–519 (AEVNWERLLSKQIEPPYVPPVRGGIGDASLFDKYPEETEEYGKDGPDQYGHFFTDF) form the AGC-kinase C-terminal domain.

The protein belongs to the protein kinase superfamily. Ser/Thr protein kinase family.

The catalysed reaction is L-seryl-[protein] + ATP = O-phospho-L-seryl-[protein] + ADP + H(+). The enzyme catalyses L-threonyl-[protein] + ATP = O-phospho-L-threonyl-[protein] + ADP + H(+). Activated by cAMP. Functionally, functions downstream of adenylate cyclase to regulate trap-development for nematode capture. In Arthrobotrys oligospora (strain ATCC 24927 / CBS 115.81 / DSM 1491) (Nematode-trapping fungus), this protein is cAMP-dependent protein kinase catalytic subunit.